Reading from the N-terminus, the 526-residue chain is GMP synthase [glutamine-hydrolyzing] (526 aa).

Residues 10–208 (RILILDFGSQ…VVDLCGCEKL (199 aa)) enclose the Glutamine amidotransferase type-1 domain. Cysteine 87 acts as the Nucleophile in catalysis. Active-site residues include histidine 182 and glutamate 184. Residues 209 to 401 (WTTENIIDDS…LGLPSDMVYR (193 aa)) form the GMPS ATP-PPase domain. 236–242 (SGGVDSS) is an ATP binding site.

As to quaternary structure, homodimer.

The catalysed reaction is XMP + L-glutamine + ATP + H2O = GMP + L-glutamate + AMP + diphosphate + 2 H(+). The protein operates within purine metabolism; GMP biosynthesis; GMP from XMP (L-Gln route): step 1/1. In terms of biological role, catalyzes the synthesis of GMP from XMP. The sequence is that of GMP synthase [glutamine-hydrolyzing] from Hydrogenovibrio crunogenus (strain DSM 25203 / XCL-2) (Thiomicrospira crunogena).